Consider the following 129-residue polypeptide: MSYKFPDNLNYADTHEYVLEEKGLLKIGVSEFAIDQLGDIVFVELADQGSTLEKGETFGTIESVKAVEEVYLPFSGEIVSVNENVVDNPELLQNDPIGEGWLVILKPKTKVSISDLMTSEEYQSKVVPK.

Positions 24-106 (LLKIGVSEFA…IGEGWLVILK (83 aa)) constitute a Lipoyl-binding domain. Lys65 carries the N6-lipoyllysine modification.

This sequence belongs to the GcvH family. In terms of assembly, the glycine cleavage system is composed of four proteins: P, T, L and H. The cofactor is (R)-lipoate.

Its function is as follows. The glycine cleavage system catalyzes the degradation of glycine. The H protein shuttles the methylamine group of glycine from the P protein to the T protein. The polypeptide is Glycine cleavage system H protein (Prochlorococcus marinus (strain MIT 9215)).